The primary structure comprises 564 residues: Dihydroxy-acid dehydratase (564 aa).

Positions 1 to 10 (MTDTRTKRRM) are enriched in basic residues. Residues 1–23 (MTDTRTKRRMNWNSHHITQGDER) are disordered. Cys57 serves as a coordination point for [2Fe-2S] cluster. Mg(2+) is bound at residue Asp89. Cys130 provides a ligand contact to [2Fe-2S] cluster. Mg(2+)-binding residues include Asp131 and Lys132. Position 132 is an N6-carboxylysine (Lys132). Cys202 contacts [2Fe-2S] cluster. A Mg(2+)-binding site is contributed by Glu454. Residue Ser480 is the Proton acceptor of the active site.

This sequence belongs to the IlvD/Edd family. Homodimer. [2Fe-2S] cluster serves as cofactor. It depends on Mg(2+) as a cofactor.

The enzyme catalyses (2R)-2,3-dihydroxy-3-methylbutanoate = 3-methyl-2-oxobutanoate + H2O. It catalyses the reaction (2R,3R)-2,3-dihydroxy-3-methylpentanoate = (S)-3-methyl-2-oxopentanoate + H2O. It functions in the pathway amino-acid biosynthesis; L-isoleucine biosynthesis; L-isoleucine from 2-oxobutanoate: step 3/4. Its pathway is amino-acid biosynthesis; L-valine biosynthesis; L-valine from pyruvate: step 3/4. Its function is as follows. Functions in the biosynthesis of branched-chain amino acids. Catalyzes the dehydration of (2R,3R)-2,3-dihydroxy-3-methylpentanoate (2,3-dihydroxy-3-methylvalerate) into 2-oxo-3-methylpentanoate (2-oxo-3-methylvalerate) and of (2R)-2,3-dihydroxy-3-methylbutanoate (2,3-dihydroxyisovalerate) into 2-oxo-3-methylbutanoate (2-oxoisovalerate), the penultimate precursor to L-isoleucine and L-valine, respectively. This Deinococcus geothermalis (strain DSM 11300 / CIP 105573 / AG-3a) protein is Dihydroxy-acid dehydratase.